The sequence spans 265 residues: Orotidine 5'-phosphate decarboxylase (265 aa).

Substrate is bound by residues Asp-37, Lys-59–His-61, Asp-91–Thr-100, Tyr-217, and Arg-235. The active-site Proton donor is Lys-93.

This sequence belongs to the OMP decarboxylase family.

The catalysed reaction is orotidine 5'-phosphate + H(+) = UMP + CO2. It functions in the pathway pyrimidine metabolism; UMP biosynthesis via de novo pathway; UMP from orotate: step 2/2. This Candida glabrata (strain ATCC 2001 / BCRC 20586 / JCM 3761 / NBRC 0622 / NRRL Y-65 / CBS 138) (Yeast) protein is Orotidine 5'-phosphate decarboxylase (URA3).